A 188-amino-acid polypeptide reads, in one-letter code: MSLISRLRAVVAGDDYLDGDLDDLVYDDDQPEQDQRASQADGGALATIGDGNPFDLGDNFSGSNVIGMPGISTAAAEVNLMEPRSFDEMPRAIQALRERKTVILNLTMMEPDQAQRAVDFVAGGTFAIDGHQERVGESIFLFAPSCVTVTNTSHDEASTPTVVSRDAEAEQQQEAAAAPSPAWGATAL.

Residues 152–162 show a composition bias toward polar residues; sequence TSHDEASTPTV. The tract at residues 152 to 188 is disordered; it reads TSHDEASTPTVVSRDAEAEQQQEAAAAPSPAWGATAL.

It belongs to the SepF family. In terms of assembly, homodimer. Interacts with FtsZ.

It localises to the cytoplasm. Cell division protein that is part of the divisome complex and is recruited early to the Z-ring. Probably stimulates Z-ring formation, perhaps through the cross-linking of FtsZ protofilaments. Its function overlaps with FtsA. The protein is Cell division protein SepF of Parasynechococcus marenigrum (strain WH8102).